Reading from the N-terminus, the 548-residue chain is MAAKEVKFGDSARKKMLVGVNVLADAVKATLGPKGRNVILEKSFGAPTITKDGVSVAKEIELEDRFENMGAQLVKDVASRANDDAGDGTTTATVLAQSIVNEGLKAVAAGMNPMDLKRGIDKATIAVVAELKKLSAPCTDTKAIAQVGTISANSDNSIGDIIAEAMEKVGKEGVITVEEGSGLENELSVVEGMQFDRGYLSPYFVNKPDTMVAELEGALILLVDKKISNIREMLPVLEAVAKAGRPLLIVAEDVEGEALATLVVNNMRGIVKVAAVKAPGFGDRRKAMLQDIAVLTGGTVISEEIGLSLESTTLEHLGSAKRVTLSKENTIIVDGAGNDGDIQARIAQIRAQVAETSSDYDREKLQERLAKLSGGVAVIKVGAGSEVEMKEKKARVEDALHATRAAVEEGVVPGGGVALIRALNAIINLKGDNADQDVGIAVLRRAVEAPLRQIAANSGDEPSVVVNEVKNGKGNFGYNAATGEYGDMIEMGILDPTKVTRSALQAASSIGGLILTTEAAVADAPKKDGAAGGGMPDMGGMGGMGGMM.

Residues 30–33, Lys51, 87–91, Gly415, 479–481, and Asp495 each bind ATP; these read TLGP, DGTTT, and NAA.

This sequence belongs to the chaperonin (HSP60) family. In terms of assembly, forms a cylinder of 14 subunits composed of two heptameric rings stacked back-to-back. Interacts with the co-chaperonin GroES.

It is found in the cytoplasm. It catalyses the reaction ATP + H2O + a folded polypeptide = ADP + phosphate + an unfolded polypeptide.. Functionally, together with its co-chaperonin GroES, plays an essential role in assisting protein folding. The GroEL-GroES system forms a nano-cage that allows encapsulation of the non-native substrate proteins and provides a physical environment optimized to promote and accelerate protein folding. The polypeptide is Chaperonin GroEL (Pseudomonas fluorescens (strain Pf0-1)).